Reading from the N-terminus, the 101-residue chain is NADH-quinone oxidoreductase subunit K (101 aa).

3 helical membrane passes run 4-24 (LSHYLVLGAILFAISVVGIFL), 30-50 (IVLLMAIELMLLAVNLNFIAF), and 61-81 (IFVFFILTVAAAESAIGLAIL).

The protein belongs to the complex I subunit 4L family. In terms of assembly, NDH-1 is composed of 14 different subunits. Subunits NuoA, H, J, K, L, M, N constitute the membrane sector of the complex.

It is found in the cell inner membrane. It catalyses the reaction a quinone + NADH + 5 H(+)(in) = a quinol + NAD(+) + 4 H(+)(out). Functionally, NDH-1 shuttles electrons from NADH, via FMN and iron-sulfur (Fe-S) centers, to quinones in the respiratory chain. The immediate electron acceptor for the enzyme in this species is believed to be ubiquinone. Couples the redox reaction to proton translocation (for every two electrons transferred, four hydrogen ions are translocated across the cytoplasmic membrane), and thus conserves the redox energy in a proton gradient. This Aromatoleum aromaticum (strain DSM 19018 / LMG 30748 / EbN1) (Azoarcus sp. (strain EbN1)) protein is NADH-quinone oxidoreductase subunit K.